Reading from the N-terminus, the 172-residue chain is Signal peptidase complex catalytic subunit SEC11 (172 aa).

Over 1–14 (MLSGLQNPRQAAAQ) the chain is Cytoplasmic. Residues 15-35 (LMNFALILSTAFMMWKGLSVA) traverse the membrane as a helical; Signal-anchor for type II membrane protein segment. Residues 36–172 (TDSPSPIVVV…MGLLVVIQRE (137 aa)) lie on the Lumenal side of the membrane. Catalysis depends on charge relay system residues S49, H90, and D115. The C-terminal short (CTS) helix stretch occupies residues 158–169 (VMLGIMGLLVVI).

It belongs to the peptidase S26B family. In terms of assembly, component of the signal peptidase complex (SPC) composed of a catalytic subunit SEC11 and three accessory subunits SPC1, SPC2 and SPC3. The complex induces a local thinning of the ER membrane which is used to measure the length of the signal peptide (SP) h-region of protein substrates. This ensures the selectivity of the complex towards h-regions shorter than 18-20 amino acids. SPC associates with the translocon complex.

It is found in the endoplasmic reticulum membrane. It carries out the reaction Cleavage of hydrophobic, N-terminal signal or leader sequences from secreted and periplasmic proteins.. Functionally, catalytic component of the signal peptidase complex (SPC) which catalyzes the cleavage of N-terminal signal sequences from nascent proteins as they are translocated into the lumen of the endoplasmic reticulum. Specifically cleaves N-terminal signal peptides that contain a hydrophobic alpha-helix (h-region) shorter than 18-20 amino acids. This Metarhizium acridum (strain CQMa 102) protein is Signal peptidase complex catalytic subunit SEC11 (SEC11).